Here is a 325-residue protein sequence, read N- to C-terminus: tRNA U34 carboxymethyltransferase (325 aa).

Carboxy-S-adenosyl-L-methionine is bound by residues K91, W105, K110, G130, 152-154 (DPS), 181-182 (ME), M197, Y201, and R316.

This sequence belongs to the class I-like SAM-binding methyltransferase superfamily. CmoB family. Homotetramer.

It carries out the reaction carboxy-S-adenosyl-L-methionine + 5-hydroxyuridine(34) in tRNA = 5-carboxymethoxyuridine(34) in tRNA + S-adenosyl-L-homocysteine + H(+). Its function is as follows. Catalyzes carboxymethyl transfer from carboxy-S-adenosyl-L-methionine (Cx-SAM) to 5-hydroxyuridine (ho5U) to form 5-carboxymethoxyuridine (cmo5U) at position 34 in tRNAs. The polypeptide is tRNA U34 carboxymethyltransferase (Saccharophagus degradans (strain 2-40 / ATCC 43961 / DSM 17024)).